A 599-amino-acid polypeptide reads, in one-letter code: Sodium-dependent phosphate transport protein 2C (599 aa).

At 1-76 (MPSSLPGSQV…RRVAGSVLKA (76 aa)) the chain is on the cytoplasmic side. Ser4 is subject to Phosphoserine. A helical membrane pass occupies residues 77 to 97 (CGLLGSLYFFICSLDVLSSAF). The Extracellular portion of the chain corresponds to 98–111 (QLLGSKVAGDIFKD). The chain crosses the membrane as a helical span at residues 112 to 132 (NVVLSNPVAGLVIGVLVTALV). The Cytoplasmic segment spans residues 133-188 (QSSSTSSSIVVSMVAAKLLTVRVSVPIIMGVNVGTSITSTLVSMAQSGDRDEFQRA). Residues 189-209 (FSGSAVHGIFNWLTVLVLLPL) traverse the membrane as a helical segment. Residues 210 to 322 (ESATALLERL…FAGTELTDLA (113 aa)) are Extracellular-facing. Asn265, Asn268, Asn286, and Asn299 each carry an N-linked (GlcNAc...) asparagine glycan. The cysteines at positions 276 and 309 are disulfide-linked. The chain crosses the membrane as a helical span at residues 323–343 (VGCILLAGSLLVLCGCLVLIV). The Cytoplasmic portion of the chain corresponds to 344 to 367 (KLLNSVLRGRVAQVVRTVINADFP). Residues 368 to 388 (FPLGWLGGYLAVLAGAGLTFA) form a helical membrane-spanning segment. Topologically, residues 389–445 (LQSSSVFTAAVVPLMGVGVISLDRAYPLLLGSNIGTTTTALLAALASPADRMLSALQ) are extracellular. A helical transmembrane segment spans residues 446–466 (VALIHFFFNLAGILLWYLVPA). The Cytoplasmic segment spans residues 467 to 485 (LRLPIPLARHFGVVTARYR). A helical transmembrane segment spans residues 486-506 (WVAGVYLLLGFLLLPLAAFGL). At 507 to 510 (SLAG) the chain is on the extracellular side. A helical transmembrane segment spans residues 511–531 (GMELAAVGGPLVGLVLLVILV). Over 532–599 (TVLQRRRPAW…NPEILASQQL (68 aa)) the chain is Cytoplasmic.

Belongs to the SLC34A transporter family. Expressed only in the kidney.

The protein resides in the apical cell membrane. It carries out the reaction 2 Na(+)(out) + phosphate(out) = 2 Na(+)(in) + phosphate(in). In terms of biological role, involved in actively transporting phosphate into cells via Na(+) cotransport in the renal brush border membrane. The cotransport has a Na(+):Pi stoichiometry of 2:1 and is electroneutral. The chain is Sodium-dependent phosphate transport protein 2C (SLC34A3) from Homo sapiens (Human).